A 417-amino-acid polypeptide reads, in one-letter code: Gamma-glutamyl phosphate reductase (417 aa).

It belongs to the gamma-glutamyl phosphate reductase family.

It localises to the cytoplasm. It catalyses the reaction L-glutamate 5-semialdehyde + phosphate + NADP(+) = L-glutamyl 5-phosphate + NADPH + H(+). Its pathway is amino-acid biosynthesis; L-proline biosynthesis; L-glutamate 5-semialdehyde from L-glutamate: step 2/2. In terms of biological role, catalyzes the NADPH-dependent reduction of L-glutamate 5-phosphate into L-glutamate 5-semialdehyde and phosphate. The product spontaneously undergoes cyclization to form 1-pyrroline-5-carboxylate. This is Gamma-glutamyl phosphate reductase from Haemophilus influenzae (strain PittEE).